The sequence spans 24 residues: Positive regulator of RepFIC repA1 expression (24 aa).

This chain is Positive regulator of RepFIC repA1 expression (repL), found in Escherichia coli (strain K12).